A 351-amino-acid chain; its full sequence is S-adenosylmethionine:tRNA ribosyltransferase-isomerase (351 aa).

This sequence belongs to the QueA family. In terms of assembly, monomer.

It localises to the cytoplasm. The enzyme catalyses 7-aminomethyl-7-carbaguanosine(34) in tRNA + S-adenosyl-L-methionine = epoxyqueuosine(34) in tRNA + adenine + L-methionine + 2 H(+). Its pathway is tRNA modification; tRNA-queuosine biosynthesis. Transfers and isomerizes the ribose moiety from AdoMet to the 7-aminomethyl group of 7-deazaguanine (preQ1-tRNA) to give epoxyqueuosine (oQ-tRNA). The polypeptide is S-adenosylmethionine:tRNA ribosyltransferase-isomerase (Idiomarina loihiensis (strain ATCC BAA-735 / DSM 15497 / L2-TR)).